Reading from the N-terminus, the 455-residue chain is Dihydrolipoyllysine-residue succinyltransferase component of 2-oxoglutarate dehydrogenase complex, mitochondrial (455 aa).

A mitochondrion-targeting transit peptide spans 1 to 68 (MLSRSRCVSR…RFFRTTAVCK (68 aa)). The region spanning 71-145 (VITVKTPAFA…EGGTPLFTLR (75 aa)) is the Lipoyl-binding domain. Phosphoserine is present on serine 82. Lysine 111 bears the N6-lipoyllysine mark. Positions 153-173 (KAKPAEAPAAAAPKAEPAVSA) are enriched in low complexity. The interval 153-214 (KAKPAEAPAA…KPTAAPPVAE (62 aa)) is disordered. Residue lysine 155 is modified to N6-acetyllysine. Residues 174–195 (VPPPPAASIPTQMPPVPSPPQP) show a composition bias toward pro residues. The catalytic stretch occupies residues 221-453 (LRAEHREKMN…AVEDPRVLLL (233 aa)). Lysine 269, lysine 274, lysine 275, lysine 279, and lysine 309 each carry N6-acetyllysine. Catalysis depends on residues histidine 426 and aspartate 430.

It belongs to the 2-oxoacid dehydrogenase family. As to quaternary structure, the 2-oxoglutarate dehydrogenase complex is composed of OGDH (2-oxoglutarate dehydrogenase; E1), DLST (dihydrolipoamide succinyltransferase; E2), DLD (dihydrolipoamide dehydrogenase; E3) and the assembly factor KGD4. It contains multiple copies of the three enzymatic components (E1, E2 and E3). In the nucleus, the 2-oxoglutarate dehydrogenase complex associates with KAT2A. Interacts with ABHD11; this interaction maintains the functional lipoylation of the 2-oxoglutarate dehydrogenase complex. (R)-lipoate is required as a cofactor.

It is found in the mitochondrion matrix. The protein resides in the nucleus. The enzyme catalyses N(6)-[(R)-dihydrolipoyl]-L-lysyl-[protein] + succinyl-CoA = N(6)-[(R)-S(8)-succinyldihydrolipoyl]-L-lysyl-[protein] + CoA. It functions in the pathway amino-acid degradation; L-lysine degradation via saccharopine pathway; glutaryl-CoA from L-lysine: step 6/6. Its pathway is carbohydrate metabolism; tricarboxylic acid cycle. Its function is as follows. Dihydrolipoamide succinyltransferase (E2) component of the 2-oxoglutarate dehydrogenase complex. The 2-oxoglutarate dehydrogenase complex catalyzes the overall conversion of 2-oxoglutarate to succinyl-CoA and CO(2). The 2-oxoglutarate dehydrogenase complex is mainly active in the mitochondrion. A fraction of the 2-oxoglutarate dehydrogenase complex also localizes in the nucleus and is required for lysine succinylation of histones: associates with KAT2A on chromatin and provides succinyl-CoA to histone succinyltransferase KAT2A. This chain is Dihydrolipoyllysine-residue succinyltransferase component of 2-oxoglutarate dehydrogenase complex, mitochondrial, found in Sus scrofa (Pig).